We begin with the raw amino-acid sequence, 416 residues long: Gamma-glutamyl phosphate reductase (416 aa).

It belongs to the gamma-glutamyl phosphate reductase family.

It localises to the cytoplasm. It catalyses the reaction L-glutamate 5-semialdehyde + phosphate + NADP(+) = L-glutamyl 5-phosphate + NADPH + H(+). It participates in amino-acid biosynthesis; L-proline biosynthesis; L-glutamate 5-semialdehyde from L-glutamate: step 2/2. Its function is as follows. Catalyzes the NADPH-dependent reduction of L-glutamate 5-phosphate into L-glutamate 5-semialdehyde and phosphate. The product spontaneously undergoes cyclization to form 1-pyrroline-5-carboxylate. This is Gamma-glutamyl phosphate reductase from Leptospira interrogans serogroup Icterohaemorrhagiae serovar copenhageni (strain Fiocruz L1-130).